Here is a 317-residue protein sequence, read N- to C-terminus: Beta-ketoacyl-[acyl-carrier-protein] synthase III (317 aa).

Residues cysteine 112 and histidine 244 contribute to the active site. The tract at residues 245–249 is ACP-binding; the sequence is QANLR. Residue asparagine 274 is part of the active site.

The protein belongs to the thiolase-like superfamily. FabH family. Homodimer.

The protein resides in the cytoplasm. It carries out the reaction malonyl-[ACP] + acetyl-CoA + H(+) = 3-oxobutanoyl-[ACP] + CO2 + CoA. It functions in the pathway lipid metabolism; fatty acid biosynthesis. In terms of biological role, catalyzes the condensation reaction of fatty acid synthesis by the addition to an acyl acceptor of two carbons from malonyl-ACP. Catalyzes the first condensation reaction which initiates fatty acid synthesis and may therefore play a role in governing the total rate of fatty acid production. Possesses both acetoacetyl-ACP synthase and acetyl transacylase activities. Its substrate specificity determines the biosynthesis of branched-chain and/or straight-chain of fatty acids. The polypeptide is Beta-ketoacyl-[acyl-carrier-protein] synthase III (Salmonella typhi).